The sequence spans 711 residues: 1,4-alpha-glucan branching enzyme GlgB (711 aa).

Asp392 (nucleophile) is an active-site residue. Glu443 functions as the Proton donor in the catalytic mechanism.

This sequence belongs to the glycosyl hydrolase 13 family. GlgB subfamily. In terms of assembly, monomer.

It carries out the reaction Transfers a segment of a (1-&gt;4)-alpha-D-glucan chain to a primary hydroxy group in a similar glucan chain.. It participates in glycan biosynthesis; glycogen biosynthesis. In terms of biological role, catalyzes the formation of the alpha-1,6-glucosidic linkages in glycogen by scission of a 1,4-alpha-linked oligosaccharide from growing alpha-1,4-glucan chains and the subsequent attachment of the oligosaccharide to the alpha-1,6 position. The polypeptide is 1,4-alpha-glucan branching enzyme GlgB (Corynebacterium jeikeium (strain K411)).